We begin with the raw amino-acid sequence, 218 residues long: DNA-binding protein HU 2 (218 aa).

A bacterial histone-like domain region spans residues 1-91 (MNKAQLVEAI…QGFKDLVSGS (91 aa)). Positions 101 to 218 (VKKAPKGSLS…TAKKATARKK (118 aa)) are disordered. The tract at residues 118 to 218 (KAAGKKAAAK…TAKKATARKK (101 aa)) is degenerate repeats region. A compositionally biased stretch (low complexity) spans 127-161 (KKATGAAKKTTGAAKKTSAAAKKTTAKKTTGAAKT). A compositionally biased stretch (basic residues) spans 162 to 172 (TAKKTTAKKSA). Over residues 173 to 182 (AKTTTAAAKK) the composition is skewed to low complexity. Positions 183-218 (TAAKKAPAKKATAKKAPAKKSTARKTTAKKATARKK) are enriched in basic residues.

It belongs to the bacterial histone-like protein family. Long actinobacterial subfamily. As to quaternary structure, homodimer.

The protein localises to the cytoplasm. It is found in the nucleoid. Functionally, histone-like DNA-binding protein which is capable of wrapping DNA to stabilize it, and thus to prevent its denaturation under extreme environmental conditions. The protein is DNA-binding protein HU 2 (hup2) of Streptomyces coelicolor (strain ATCC BAA-471 / A3(2) / M145).